Consider the following 164-residue polypeptide: MFSKTLVVLAAVAAVTVNGLTAKECQDAFTGEVAKLTTGALPLVQPCSSDSGFSMVPPTGLPTDDQYVKMCASKNCKALLEFIKGAGLKDCELNFGSIFPGSVPLNVYQLGQGFDAKCESISGGGSTPTTAPPSGTTPTTPTTAPPTGTTPGVTPSPTTPKPAC.

An N-terminal signal peptide occupies residues 1–22; sequence MFSKTLVVLAAVAAVTVNGLTA. 3 disulfide bridges follow: Cys25-Cys91, Cys47-Cys76, and Cys71-Cys118. The disordered stretch occupies residues 121 to 164; that stretch reads ISGGGSTPTTAPPSGTTPTTPTTAPPTGTTPGVTPSPTTPKPAC. Residues 127–156 show a composition bias toward low complexity; it reads TPTTAPPSGTTPTTPTTAPPTGTTPGVTPS.

This sequence belongs to the elicitin family.

It localises to the secreted. Induces local and distal defense responses (incompatible hypersensitive reaction) in plants from the solanaceae and cruciferae families. Elicits leaf necrosis and causes the accumulation of pathogenesis-related proteins. Might interact with the lipidic molecules of the plasma membrane. This Pythium oligandrum (Mycoparasitic fungus) protein is Elicitin-like protein 2 (POD-2).